We begin with the raw amino-acid sequence, 206 residues long: Thymidylate kinase (206 aa).

Position 11–18 (11–18 (GIDGAGKT)) interacts with ATP.

Belongs to the thymidylate kinase family.

The enzyme catalyses dTMP + ATP = dTDP + ADP. Its function is as follows. Phosphorylation of dTMP to form dTDP in both de novo and salvage pathways of dTTP synthesis. The protein is Thymidylate kinase of Burkholderia cenocepacia (strain HI2424).